The sequence spans 150 residues: Transcription antitermination protein NusB (150 aa).

Belongs to the NusB family.

Involved in transcription antitermination. Required for transcription of ribosomal RNA (rRNA) genes. Binds specifically to the boxA antiterminator sequence of the ribosomal RNA (rrn) operons. The polypeptide is Transcription antitermination protein NusB (Streptococcus pyogenes serotype M2 (strain MGAS10270)).